Reading from the N-terminus, the 364-residue chain is A-type ATP synthase subunit C (364 aa).

Belongs to the V-ATPase V0D/AC39 subunit family. Has multiple subunits with at least A(3), B(3), C, D, E, F, H, I and proteolipid K(x).

Its subcellular location is the cell membrane. Functionally, component of the A-type ATP synthase that produces ATP from ADP in the presence of a proton gradient across the membrane. This chain is A-type ATP synthase subunit C, found in Desulfurococcus sp. (strain SY).